The sequence spans 382 residues: Chaperone protein DnaJ (382 aa).

The region spanning 5 to 70 (DYYETLGVSR…NKRAAYDRYG (66 aa)) is the J domain. The CR-type zinc-finger motif lies at 140–218 (GKTAQIRVPT…CHGQGRITEE (79 aa)). Cys153, Cys156, Cys170, Cys173, Cys192, Cys195, Cys206, and Cys209 together coordinate Zn(2+). 4 CXXCXGXG motif repeats span residues 153-160 (CDVCSGSG), 170-177 (CGTCQGSG), 192-199 (CPTCHGRG), and 206-213 (CGKCHGQG).

It belongs to the DnaJ family. As to quaternary structure, homodimer. Zn(2+) serves as cofactor.

The protein resides in the cytoplasm. In terms of biological role, participates actively in the response to hyperosmotic and heat shock by preventing the aggregation of stress-denatured proteins and by disaggregating proteins, also in an autonomous, DnaK-independent fashion. Unfolded proteins bind initially to DnaJ; upon interaction with the DnaJ-bound protein, DnaK hydrolyzes its bound ATP, resulting in the formation of a stable complex. GrpE releases ADP from DnaK; ATP binding to DnaK triggers the release of the substrate protein, thus completing the reaction cycle. Several rounds of ATP-dependent interactions between DnaJ, DnaK and GrpE are required for fully efficient folding. Also involved, together with DnaK and GrpE, in the DNA replication of plasmids through activation of initiation proteins. The chain is Chaperone protein DnaJ from Rhizobium rhizogenes (strain K84 / ATCC BAA-868) (Agrobacterium radiobacter).